Consider the following 267-residue polypeptide: Hydroxyethylthiazole kinase (267 aa).

Residue methionine 44 coordinates substrate. Lysine 120 and threonine 166 together coordinate ATP. Residue glycine 193 participates in substrate binding.

The protein belongs to the Thz kinase family. Requires Mg(2+) as cofactor.

It catalyses the reaction 5-(2-hydroxyethyl)-4-methylthiazole + ATP = 4-methyl-5-(2-phosphooxyethyl)-thiazole + ADP + H(+). It participates in cofactor biosynthesis; thiamine diphosphate biosynthesis; 4-methyl-5-(2-phosphoethyl)-thiazole from 5-(2-hydroxyethyl)-4-methylthiazole: step 1/1. In terms of biological role, catalyzes the phosphorylation of the hydroxyl group of 4-methyl-5-beta-hydroxyethylthiazole (THZ). The chain is Hydroxyethylthiazole kinase from Desulfitobacterium hafniense (strain DSM 10664 / DCB-2).